The following is a 114-amino-acid chain: uncharacterized protein (114 aa).

This is an uncharacterized protein from Archaeoglobus fulgidus (strain ATCC 49558 / DSM 4304 / JCM 9628 / NBRC 100126 / VC-16).